We begin with the raw amino-acid sequence, 209 residues long: Thymidine kinase (209 aa).

Residues 9-16 (SAMNAGKT) and 88-91 (DEAQ) contribute to the ATP site. Catalysis depends on glutamate 89, which acts as the Proton acceptor.

The protein belongs to the thymidine kinase family. As to quaternary structure, homotetramer.

The protein localises to the cytoplasm. It carries out the reaction thymidine + ATP = dTMP + ADP + H(+). The polypeptide is Thymidine kinase (Xanthomonas campestris pv. campestris (strain 8004)).